The chain runs to 732 residues: Cullin-3B (732 aa).

In terms of domain architecture, Cullin neddylation spans 662–724 (DRKPQIEAAI…RDFLERDNTD (63 aa)). Residue K676 forms a Glycyl lysine isopeptide (Lys-Gly) (interchain with G-Cter in NEDD8) linkage.

This sequence belongs to the cullin family. Interacts with BTB/POZ-MATH proteins BPM1 and BPM3. Post-translationally, neddylated. Deneddylated via its interaction with the COP9 signalosome (CSN) complex.

The protein operates within protein modification; protein ubiquitination. Functionally, component of the cullin-RING ubiquitin ligases (CRL), or CUL3-RBX1-BTB protein E3 ligase complexes which mediate the ubiquitination and subsequent proteasomal degradation of target proteins. The functional specificity of the CRL complex depends on the BTB domain-containing protein as the substrate recognition component. Involved in embryo pattern formation and endosperm development. Required for the normal division and organization of the root stem cells and columella root cap cells. Regulates primary root growth by an unknown pathway, but in an ethylene-dependent manner. Functions in distal root patterning, by an ethylene-independent mechanism. Functionally redundant with CUL3A. This is Cullin-3B (CUL3B) from Arabidopsis thaliana (Mouse-ear cress).